We begin with the raw amino-acid sequence, 427 residues long: Adenylosuccinate synthetase (427 aa).

GTP is bound by residues 12–18 (GDEGKGK) and 40–42 (GHT). The Proton acceptor role is filled by aspartate 13. Residues aspartate 13 and glycine 40 each coordinate Mg(2+). IMP contacts are provided by residues 13–16 (DEGK), 38–41 (NAGH), threonine 128, arginine 142, glutamine 223, threonine 238, and arginine 302. Histidine 41 functions as the Proton donor in the catalytic mechanism. A substrate-binding site is contributed by 298 to 304 (TTTGRPR). GTP contacts are provided by residues arginine 304, 330–332 (SID), and 412–414 (SVG).

It belongs to the adenylosuccinate synthetase family. In terms of assembly, homodimer. Mg(2+) is required as a cofactor.

The protein localises to the cytoplasm. The enzyme catalyses IMP + L-aspartate + GTP = N(6)-(1,2-dicarboxyethyl)-AMP + GDP + phosphate + 2 H(+). It functions in the pathway purine metabolism; AMP biosynthesis via de novo pathway; AMP from IMP: step 1/2. In terms of biological role, plays an important role in the de novo pathway of purine nucleotide biosynthesis. Catalyzes the first committed step in the biosynthesis of AMP from IMP. In Staphylococcus saprophyticus subsp. saprophyticus (strain ATCC 15305 / DSM 20229 / NCIMB 8711 / NCTC 7292 / S-41), this protein is Adenylosuccinate synthetase.